The sequence spans 91 residues: MARSIKKGPFVDAHLLKKVDAVRTSNDKRPIKTWSRRSTVLPDFVGLTIAVHNGRQHVPVFVSENMVGHKLGEFALTRTFKGHAASKKAKR.

Belongs to the universal ribosomal protein uS19 family.

Protein S19 forms a complex with S13 that binds strongly to the 16S ribosomal RNA. This chain is Small ribosomal subunit protein uS19, found in Aromatoleum aromaticum (strain DSM 19018 / LMG 30748 / EbN1) (Azoarcus sp. (strain EbN1)).